The primary structure comprises 160 residues: Type IV major fimbrial protein FimA (160 aa).

The propeptide at Met-1–Gly-7 is leader sequence. Phe-8 is subject to N-methylphenylalanine. The helical transmembrane segment at Phe-8–Ile-28 threads the bilayer. The cysteines at positions 63 and 105 are disulfide-linked.

This sequence belongs to the N-Me-Phe pilin family. As to quaternary structure, the pili are polar flexible filaments of about 5.4 nanometers diameter and 2.5 micrometers average length; they consist of only a single polypeptide chain arranged in a helical configuration of five subunits per turn in the assembled pilus.

It is found in the fimbrium. The protein resides in the membrane. Major component of the type IV fimbriae that plays an essential role in twitching motility, natural transformation, and protease secretion. The polypeptide is Type IV major fimbrial protein FimA (fimA) (Dichelobacter nodosus (Bacteroides nodosus)).